The primary structure comprises 327 residues: 4-hydroxyproline 2-epimerase (327 aa).

Cysteine 85 serves as the catalytic Proton acceptor. Substrate contacts are provided by residues 86–87 (GH), histidine 205, and aspartate 231. Cysteine 235 (proton donor) is an active-site residue. Substrate is bound at residue 236 to 237 (GT).

This sequence belongs to the proline racemase family.

It carries out the reaction trans-4-hydroxy-L-proline = cis-4-hydroxy-D-proline. Catalyzes the epimerization of trans-4-hydroxy-L-proline (t4LHyp) to cis-4-hydroxy-D-proline (c4DHyp). Displays no proline racemase activity. The protein is 4-hydroxyproline 2-epimerase of Roseibium alexandrii (strain DSM 17067 / NCIMB 14079 / DFL-11) (Labrenzia alexandrii).